Here is a 226-residue protein sequence, read N- to C-terminus: Type-5 uracil-DNA glycosylase (226 aa).

[4Fe-4S] cluster-binding residues include cysteine 23, cysteine 26, cysteine 125, and cysteine 140.

The protein belongs to the uracil-DNA glycosylase (UDG) superfamily. Type 5 (UDGb) family.

Functionally, DNA glycosylase with broad substrate specificity. Can remove uracil from double-stranded DNA containing either a U/G or U/A base pair. Can also process hydroxymethyluracil (mispaired with guanine or adenine), hypoxanthine and fluorouracil. Exhibits a clear preference for double-stranded DNA substrates, but can also process uracil in single-stranded DNA, with lower efficiency. This is Type-5 uracil-DNA glycosylase from Pyrobaculum aerophilum (strain ATCC 51768 / DSM 7523 / JCM 9630 / CIP 104966 / NBRC 100827 / IM2).